The chain runs to 283 residues: MNILSIQSHVSYGHVGNSAAVFPLQRIGHEVWPVHTVNFSNHTGYGQWGGELIPAAQVRNVIDGMEQRGAFERIDAILSGYQGGSDIADVIVDAVARIKEANPQAVYACDPVMGNAKSGCFVSDLIPPLLRDKVVPVADIITPNQFELEYLTGVPAHDTTSTLEAIAAAQEMGPNTVLVTSVRRPETPADAIEMIAANEQGAWLVRTPFIDFKRNGSGDVTAALFTGHYIRERDAADALARTASSVFDLIETTFTADSRELLIIESQEAIAHPRLQFEVEQIA.

Substrate is bound at residue Ser8. 2 residues coordinate ATP: Asp110 and Glu147. Asp219 serves as a coordination point for substrate.

This sequence belongs to the pyridoxine kinase family. PdxY subfamily. In terms of assembly, homodimer. The cofactor is Mg(2+).

It catalyses the reaction pyridoxal + ATP = pyridoxal 5'-phosphate + ADP + H(+). Its pathway is cofactor metabolism; pyridoxal 5'-phosphate salvage; pyridoxal 5'-phosphate from pyridoxal: step 1/1. Its function is as follows. Pyridoxal kinase involved in the salvage pathway of pyridoxal 5'-phosphate (PLP). Catalyzes the phosphorylation of pyridoxal to PLP. The chain is Pyridoxal kinase PdxY from Corynebacterium diphtheriae (strain ATCC 700971 / NCTC 13129 / Biotype gravis).